Consider the following 262-residue polypeptide: MSAAAGAAQAAEHHDMLHMVEMDLNFWNIPLFTEYDKYWHIMGLSISPRTMIMTWITMALVLLFAWACTKNQNVRSPGKAQATFEVLWEFLGGQVFSNLGNKLGAAMMPIIVTFFIYIVFANLLGLIPTLSSPTADKNTTFGLALIVVLLIHYHGLKANGVGGHIGHYFQPFKPFVVIHLIEEIARPVTLAFRLYGNIFAGEVLIAVLLGLININAYVFGGFIPSVIWLAFSVFVGFVQAFVFSMLTIAYVSQFAAHEADHH.

6 helical membrane passes run 50–70 (TMIM…ACTK), 107–127 (MMPI…LGLI), 141–161 (FGLA…ANGV), 194–214 (LYGN…LINI), 218–238 (VFGG…VGFV), and 239–259 (QAFV…AHEA).

Belongs to the ATPase A chain family. F-type ATPases have 2 components, CF(1) - the catalytic core - and CF(0) - the membrane proton channel. CF(1) has five subunits: alpha(3), beta(3), gamma(1), delta(1), epsilon(1). CF(0) has three main subunits: a(1), b(2) and c(9-12). The alpha and beta chains form an alternating ring which encloses part of the gamma chain. CF(1) is attached to CF(0) by a central stalk formed by the gamma and epsilon chains, while a peripheral stalk is formed by the delta and b chains.

It localises to the cell membrane. Functionally, key component of the proton channel; it plays a direct role in the translocation of protons across the membrane. The chain is ATP synthase subunit a from Desulforamulus reducens (strain ATCC BAA-1160 / DSM 100696 / MI-1) (Desulfotomaculum reducens).